A 596-amino-acid chain; its full sequence is Ulvan-active sulfatase (596 aa).

The signal sequence occupies residues 1–27 (MLFLRFKFFNNRLLFVSVLCFVICVSC). Residues E58, D59, C97, D306, and H307 each contribute to the Ca(2+) site. The active-site Nucleophile is the C97. At C97 the chain carries 3-oxoalanine (Cys).

The protein belongs to the sulfatase family. Ca(2+) serves as cofactor. Post-translationally, the conversion to 3-oxoalanine (also known as C-formylglycine, FGly), of a serine or cysteine residue in prokaryotes and of a cysteine residue in eukaryotes, is critical for catalytic activity.

Its subcellular location is the periplasm. Sulfatase involved in ulvan degradation. Ulvan is the main polysaccharide component of the Ulvales (green seaweed) cell wall. It is composed of disaccharide building blocks comprising 3-sulfated rhamnose (Rha3S) linked to D-glucuronic acid (GlcA), L-iduronic acid (IduA), or D-xylose (Xyl). The sulfatase desulfates Xyl2S-Rha3S, product of the degradation of ulvan by endo-acting alpha-1,4-L-rhamnosidase, to Xyl-Rha3S. The polypeptide is Ulvan-active sulfatase (Formosa agariphila (strain DSM 15362 / KCTC 12365 / LMG 23005 / KMM 3901 / M-2Alg 35-1)).